A 301-amino-acid chain; its full sequence is Outer membrane porin G (301 aa).

The N-terminal stretch at 1 to 21 is a signal peptide; it reads MKKLLPCTALVMCAGMACAQA. 16 beta stranded membrane-spanning segments follow: residues 27–35, 47–57, 64–72, 89–98, 104–112, 129–136, 149–158, 172–182, 186–195, 201–209, 213–222, 230–238, 240–248, 254–265, 269–279, and 289–300; these read WHFNIGAMY, MDGLAEPSVYF, WRIALAYYQ, RPELEVHYQF, FSFGLTGGF, NMQRWKIA, FNGWLSMYKF, VETETGLQYTF, VALRVNYYLE, DDSRNNGEF, EIRAYLPLTL, YTRIGLDRW, NWDWQDDIE, FNRVGLFYGYDF, LSVSLEYAFEW, and KFHYAGVGVNYS.

As to quaternary structure, monomer.

The protein localises to the cell outer membrane. Functionally, forms channels functionally larger than those of classical porins. In terms of biological role, may act as a regulator of the RCS-phosphorelay signal transduction pathway. This is Outer membrane porin G (ompG) from Escherichia coli (strain K12).